Reading from the N-terminus, the 306-residue chain is NAD kinase 1 (306 aa).

Catalysis depends on Asp67, which acts as the Proton acceptor. Residues 67–68 (DG), 149–150 (NE), and Asp181 each bind NAD(+).

It belongs to the NAD kinase family. Requires a divalent metal cation as cofactor.

The protein localises to the cytoplasm. It catalyses the reaction NAD(+) + ATP = ADP + NADP(+) + H(+). In terms of biological role, involved in the regulation of the intracellular balance of NAD and NADP, and is a key enzyme in the biosynthesis of NADP. Catalyzes specifically the phosphorylation on 2'-hydroxyl of the adenosine moiety of NAD to yield NADP. The chain is NAD kinase 1 from Thermosynechococcus vestitus (strain NIES-2133 / IAM M-273 / BP-1).